We begin with the raw amino-acid sequence, 908 residues long: Alanine--tRNA ligase (908 aa).

The Zn(2+) site is built by histidine 588, histidine 592, cysteine 691, and histidine 695.

This sequence belongs to the class-II aminoacyl-tRNA synthetase family. The cofactor is Zn(2+).

The protein localises to the cytoplasm. The enzyme catalyses tRNA(Ala) + L-alanine + ATP = L-alanyl-tRNA(Ala) + AMP + diphosphate. In terms of biological role, catalyzes the attachment of alanine to tRNA(Ala) in a two-step reaction: alanine is first activated by ATP to form Ala-AMP and then transferred to the acceptor end of tRNA(Ala). Also edits incorrectly charged Ser-tRNA(Ala) and Gly-tRNA(Ala) via its editing domain. This Mycobacterium leprae (strain TN) protein is Alanine--tRNA ligase.